Here is a 102-residue protein sequence, read N- to C-terminus: Small ribosomal subunit protein uS10 (102 aa).

The protein belongs to the universal ribosomal protein uS10 family. As to quaternary structure, part of the 30S ribosomal subunit.

In terms of biological role, involved in the binding of tRNA to the ribosomes. In Rhizobium meliloti (strain 1021) (Ensifer meliloti), this protein is Small ribosomal subunit protein uS10.